Here is a 294-residue protein sequence, read N- to C-terminus: Fatty acyl-CoA reductase Rv0547c (294 aa).

NADP(+) contacts are provided by Ser-49, Ser-50, Ile-52, Arg-72, Asp-97, Leu-98, Asn-124, Tyr-192, Lys-196, Val-225, and Thr-227. The active-site Proton acceptor is the Tyr-192.

This sequence belongs to the short-chain dehydrogenases/reductases (SDR) family.

It is found in the host mitochondrion. It carries out the reaction hexadecanal + NADP(+) + CoA = hexadecanoyl-CoA + NADPH + H(+). Functionally, oxidoreductase that promotes the persistence of M.tuberculosis in host macrophages by reprogramming the fatty acid metabolism in host mitochondria. When localized in the host mitochondria, it potentially acts on unknown lipid substrates and converts them into products that directly or indirectly alter the lipid profile of the mitochondria. This change in lipid profile results in increased mitochondrial membrane fluidity, enhanced endogenous fatty acid oxidation and increased mitochondrial spare respiratory capacity. All these events eventually favor M.tuberculosis persistence in the host macrophages. In vitro, can catalyze the NADPH-dependent reduction of palmitoyl-CoA (hexadecanoyl-CoA). The polypeptide is Fatty acyl-CoA reductase Rv0547c (Mycobacterium tuberculosis (strain ATCC 25618 / H37Rv)).